A 306-amino-acid chain; its full sequence is Pantothenate kinase (306 aa).

ATP is bound at residue 91–98; it reads GSVAVGKS.

It belongs to the prokaryotic pantothenate kinase family.

The protein resides in the cytoplasm. It catalyses the reaction (R)-pantothenate + ATP = (R)-4'-phosphopantothenate + ADP + H(+). It participates in cofactor biosynthesis; coenzyme A biosynthesis; CoA from (R)-pantothenate: step 1/5. This Streptococcus suis (strain 98HAH33) protein is Pantothenate kinase.